The chain runs to 482 residues: tRNA sulfurtransferase (482 aa).

A THUMP domain is found at 61-165 (LAIRDALTRI…DDRLLLIKGR (105 aa)). ATP is bound by residues 183 to 184 (LI), lysine 265, glycine 287, and glutamine 296. Cysteine 344 and cysteine 456 are joined by a disulfide. Residues 404–482 (FGPNDVILDI…GFNNVKVYRP (79 aa)) enclose the Rhodanese domain. Cysteine 456 acts as the Cysteine persulfide intermediate in catalysis.

It belongs to the ThiI family.

The protein resides in the cytoplasm. The enzyme catalyses [ThiI sulfur-carrier protein]-S-sulfanyl-L-cysteine + a uridine in tRNA + 2 reduced [2Fe-2S]-[ferredoxin] + ATP + H(+) = [ThiI sulfur-carrier protein]-L-cysteine + a 4-thiouridine in tRNA + 2 oxidized [2Fe-2S]-[ferredoxin] + AMP + diphosphate. It carries out the reaction [ThiS sulfur-carrier protein]-C-terminal Gly-Gly-AMP + S-sulfanyl-L-cysteinyl-[cysteine desulfurase] + AH2 = [ThiS sulfur-carrier protein]-C-terminal-Gly-aminoethanethioate + L-cysteinyl-[cysteine desulfurase] + A + AMP + 2 H(+). It functions in the pathway cofactor biosynthesis; thiamine diphosphate biosynthesis. In terms of biological role, catalyzes the ATP-dependent transfer of a sulfur to tRNA to produce 4-thiouridine in position 8 of tRNAs, which functions as a near-UV photosensor. Also catalyzes the transfer of sulfur to the sulfur carrier protein ThiS, forming ThiS-thiocarboxylate. This is a step in the synthesis of thiazole, in the thiamine biosynthesis pathway. The sulfur is donated as persulfide by IscS. This is tRNA sulfurtransferase from Escherichia coli O127:H6 (strain E2348/69 / EPEC).